The sequence spans 808 residues: Protein tortoise (808 aa).

Residues 43-78 adopt a coiled-coil conformation; it reads KDRKELYSLNNDSIKKKLNQLKDETNQLLKERGEEL. Residues 152–171 form a disordered region; sequence LTSGGANKKKSPFLEDNNNK. Positions 694-733 form a coiled coil; sequence EDLDFQIEELELMIKNKKILEREIKAHNEKISKIIKDSRD.

The protein localises to the mitochondrion. Required for efficient chemotaxis. This chain is Protein tortoise (torA), found in Dictyostelium discoideum (Social amoeba).